A 468-amino-acid chain; its full sequence is Chromosomal replication initiator protein DnaA (468 aa).

The tract at residues methionine 1 to serine 84 is domain I, interacts with DnaA modulators. Residues serine 80–glutamine 106 are disordered. The domain II stretch occupies residues serine 84–serine 131. Residues asparagine 132 to alanine 348 are domain III, AAA+ region. Residues glycine 176, glycine 178, lysine 179, and threonine 180 each coordinate ATP. Positions asparagine 349–serine 468 are domain IV, binds dsDNA.

The protein belongs to the DnaA family. Oligomerizes as a right-handed, spiral filament on DNA at oriC.

The protein resides in the cytoplasm. Functionally, plays an essential role in the initiation and regulation of chromosomal replication. ATP-DnaA binds to the origin of replication (oriC) to initiate formation of the DNA replication initiation complex once per cell cycle. Binds the DnaA box (a 9 base pair repeat at the origin) and separates the double-stranded (ds)DNA. Forms a right-handed helical filament on oriC DNA; dsDNA binds to the exterior of the filament while single-stranded (ss)DNA is stabiized in the filament's interior. The ATP-DnaA-oriC complex binds and stabilizes one strand of the AT-rich DNA unwinding element (DUE), permitting loading of DNA polymerase. After initiation quickly degrades to an ADP-DnaA complex that is not apt for DNA replication. Binds acidic phospholipids. The sequence is that of Chromosomal replication initiator protein DnaA from Vibrio parahaemolyticus serotype O3:K6 (strain RIMD 2210633).